Here is a 213-residue protein sequence, read N- to C-terminus: LexA repressor (213 aa).

A DNA-binding region (H-T-H motif) is located at residues 31 to 51 (RAEISRELGFRSPNAAEEYLK). Active-site for autocatalytic cleavage activity residues include serine 129 and lysine 166.

It belongs to the peptidase S24 family. As to quaternary structure, homodimer.

It catalyses the reaction Hydrolysis of Ala-|-Gly bond in repressor LexA.. Its function is as follows. Represses a number of genes involved in the response to DNA damage (SOS response), including recA and lexA. In the presence of single-stranded DNA, RecA interacts with LexA causing an autocatalytic cleavage which disrupts the DNA-binding part of LexA, leading to derepression of the SOS regulon and eventually DNA repair. This chain is LexA repressor, found in Mannheimia succiniciproducens (strain KCTC 0769BP / MBEL55E).